We begin with the raw amino-acid sequence, 219 residues long: ATP phosphoribosyltransferase (219 aa).

This sequence belongs to the ATP phosphoribosyltransferase family. Short subfamily. As to quaternary structure, heteromultimer composed of HisG and HisZ subunits.

Its subcellular location is the cytoplasm. It catalyses the reaction 1-(5-phospho-beta-D-ribosyl)-ATP + diphosphate = 5-phospho-alpha-D-ribose 1-diphosphate + ATP. It participates in amino-acid biosynthesis; L-histidine biosynthesis; L-histidine from 5-phospho-alpha-D-ribose 1-diphosphate: step 1/9. Its function is as follows. Catalyzes the condensation of ATP and 5-phosphoribose 1-diphosphate to form N'-(5'-phosphoribosyl)-ATP (PR-ATP). Has a crucial role in the pathway because the rate of histidine biosynthesis seems to be controlled primarily by regulation of HisG enzymatic activity. The polypeptide is ATP phosphoribosyltransferase (Paramagnetospirillum magneticum (strain ATCC 700264 / AMB-1) (Magnetospirillum magneticum)).